The following is a 461-amino-acid chain: Homocitrate synthase (461 aa).

A Pyruvate carboxyltransferase domain is found at 4–259 (VGILDSTLRE…IEVVKLDKLQ (256 aa)). Arg-12 lines the 2-oxoglutarate pocket. Residue Glu-13 participates in Mg(2+) binding. The 2-oxoglutarate site is built by His-76, Arg-136, and Thr-170. Mg(2+) contacts are provided by His-198 and His-200. His-292 serves as the catalytic Proton acceptor.

The protein belongs to the alpha-IPM synthase/homocitrate synthase family. Homocitrate synthase LYS20/LYS21 subfamily. It depends on Mg(2+) as a cofactor. Requires Mn(2+) as cofactor.

It carries out the reaction acetyl-CoA + 2-oxoglutarate + H2O = (2R)-homocitrate + CoA + H(+). Its pathway is amino-acid biosynthesis; L-lysine biosynthesis via AAA pathway; L-alpha-aminoadipate from 2-oxoglutarate: step 1/5. Catalyzes the aldol-type condensation of 2-oxoglutarate with acetyl-CoA to yield homocitrate. Carries out the first step of the alpha-aminoadipate (AAA) lysine biosynthesis pathway. In Saccharolobus islandicus (strain L.S.2.15 / Lassen #1) (Sulfolobus islandicus), this protein is Homocitrate synthase.